The following is a 799-amino-acid chain: High affinity nerve growth factor receptor (799 aa).

An N-terminal signal peptide occupies residues 1 to 33 (MLRGQRLGQLGWHRPAAGLGSLMTSLMLACASA). The Extracellular portion of the chain corresponds to 34 to 420 (ASCREVCCPV…VEKKDETPFG (387 aa)). Intrachain disulfides connect cysteine 36-cysteine 41 and cysteine 40-cysteine 50. N-linked (GlcNAc...) asparagine glycosylation is present at asparagine 67. LRR repeat units follow at residues 90–113 (LGELRSLTIVKSGLRFVAPDAFRF) and 116–137 (RLSHLNLSSNALESLSWKTVQG). Asparagine 121, asparagine 190, asparagine 204, asparagine 255, asparagine 264, asparagine 320, asparagine 325, asparagine 341, asparagine 361, and asparagine 404 each carry an N-linked (GlcNAc...) asparagine glycan. In terms of domain architecture, LRRCT spans 148-219 (NPLHCSCALF…GDDVFLQCQV (72 aa)). Cysteine 154 and cysteine 193 are oxidised to a cystine. Ig-like C2-type domains are found at residues 196-285 (PTVK…VSVS) and 205-368 (DSVE…LAAN). 2 cysteine pairs are disulfide-bonded: cysteine 217/cysteine 267 and cysteine 302/cysteine 348. The chain crosses the membrane as a helical span at residues 421 to 441 (VSVAVGLAVSAALFLSALLLV). The Cytoplasmic portion of the chain corresponds to 442 to 799 (LNKCGQRSKF…APPSYLDVLG (358 aa)). The segment at 472–493 (MTLGGSSLSPTEGKGSGLQGHI) is interaction with SQSTM1. The residue at position 499 (tyrosine 499) is a Phosphotyrosine; by autocatalysis. The region spanning 513-784 (IILKWELGEG…LSMKDVHARL (272 aa)) is the Protein kinase domain. ATP contacts are provided by residues 519 to 527 (LGEGAFGKV) and lysine 547. Aspartate 653 serves as the catalytic Proton acceptor. 4 positions are modified to phosphotyrosine; by autocatalysis: tyrosine 679, tyrosine 683, tyrosine 684, and tyrosine 794.

The protein belongs to the protein kinase superfamily. Tyr protein kinase family. Insulin receptor subfamily. In terms of assembly, exists in a dynamic equilibrium between monomeric (low affinity) and dimeric (high affinity) structures. Homodimerization is induced by binding of a NGF dimer. Found in a complex, at least composed of KIDINS220, MAGI2, NTRK1 and RAPGEF2; the complex is mainly formed at late endosomes in a nerve growth factor (NGF)-dependent manner. Interacts with RAPGEF2; the interaction is strengthened after NGF stimulation. Interacts with SQSTM1; bridges NTRK1 to NGFR. Forms a ternary complex with NGFR and KIDINS220; this complex is affected by the expression levels of KIDINS220 and an increase in KIDINS220 expression leads to a decreased association of NGFR and NTRK1. Interacts (phosphorylated upon activation by NGF) with SHC1; mediates SHC1 phosphorylation and activation. Interacts (phosphorylated upon activation by NGF) with PLCG1; mediates PLCG1 phosphorylation and activation. Interacts (phosphorylated) with SH2B1 and SH2B2. Interacts with GRB2. Interacts with PIK3R1. Interacts with FRS2. Interacts with SORT1; may regulate NTRK1 anterograde axonal transport. Interacts with SH2D1A; regulates NTRK1. Interacts with NRADD. Interacts with RAB7A. Interacts with PTPRS. Interacts with USP36; USP36 does not deubiquitinate NTRK1. Interacts with GGA3. Interacts with TSPAN1; this interaction promotes NTRK1 stability. Post-translationally, ligand-mediated autophosphorylation. Interaction with SQSTM1 is phosphotyrosine-dependent. Autophosphorylation at Tyr-499 mediates interaction and phosphorylation of SHC1. In terms of processing, N-glycosylated. Ubiquitinated. Undergoes polyubiquitination upon activation; regulated by NGFR. Ubiquitination by NEDD4L leads to degradation. Ubiquitination regulates the internalization of the receptor.

It is found in the cell membrane. The protein localises to the early endosome membrane. It localises to the late endosome membrane. Its subcellular location is the recycling endosome membrane. The enzyme catalyses L-tyrosyl-[protein] + ATP = O-phospho-L-tyrosyl-[protein] + ADP + H(+). The pro-survival signaling effect of NTRK1 in neurons requires its endocytosis into signaling early endosomes and its retrograde axonal transport. This is regulated by different proteins including CFL1, RAC1 and SORT1. NTF3 is unable to induce this signaling probably due to the lability of the NTF3-NTRK1 complex in endosomes. SH2D1A inhibits the autophosphorylation of the receptor, and alters the recruitment and activation of downstream effectors and signaling cascades. Regulated by NGFR. In terms of biological role, receptor tyrosine kinase involved in the development and the maturation of the central and peripheral nervous systems through regulation of proliferation, differentiation and survival of sympathetic and nervous neurons. High affinity receptor for NGF which is its primary ligand, it can also bind and be activated by NTF3/neurotrophin-3. However, NTF3 only supports axonal extension through NTRK1 but has no effect on neuron survival. Upon dimeric NGF ligand-binding, undergoes homodimerization, autophosphorylation and activation. Recruits, phosphorylates and/or activates several downstream effectors including SHC1, FRS2, SH2B1, SH2B2 and PLCG1 that regulate distinct overlapping signaling cascades driving cell survival and differentiation. Through SHC1 and FRS2 activates a GRB2-Ras-MAPK cascade that regulates cell differentiation and survival. Through PLCG1 controls NF-Kappa-B activation and the transcription of genes involved in cell survival. Through SHC1 and SH2B1 controls a Ras-PI3 kinase-AKT1 signaling cascade that is also regulating survival. In absence of ligand and activation, may promote cell death, making the survival of neurons dependent on trophic factors. The sequence is that of High affinity nerve growth factor receptor (Ntrk1) from Mus musculus (Mouse).